The sequence spans 285 residues: Ribosomal RNA small subunit methyltransferase I (285 aa).

Belongs to the methyltransferase superfamily. RsmI family.

Its subcellular location is the cytoplasm. It catalyses the reaction cytidine(1402) in 16S rRNA + S-adenosyl-L-methionine = 2'-O-methylcytidine(1402) in 16S rRNA + S-adenosyl-L-homocysteine + H(+). Functionally, catalyzes the 2'-O-methylation of the ribose of cytidine 1402 (C1402) in 16S rRNA. The polypeptide is Ribosomal RNA small subunit methyltransferase I (Mycobacterium tuberculosis (strain CDC 1551 / Oshkosh)).